Consider the following 641-residue polypeptide: Protein BCAP (641 aa).

Coiled-coil stretches lie at residues 83–144, 191–270, 299–375, and 487–599; these read HWPV…KQND, EKDN…RKLE, QKQK…EREQ, and FKLE…TLNA.

Belongs to the ODF2 family.

The protein resides in the cytoplasm. It localises to the cytoskeleton. Its subcellular location is the microtubule organizing center. It is found in the centrosome. The protein localises to the centriole. The protein resides in the centriolar satellite. It localises to the cilium basal body. Acts as a suppressor of ciliogenesis, specifically, the initiation of ciliogenesis. In Xenopus laevis (African clawed frog), this protein is Protein BCAP (odf2l).